We begin with the raw amino-acid sequence, 462 residues long: Glycine--tRNA ligase (462 aa).

Residues arginine 100 and glutamate 174 each coordinate substrate. Residues 206–208, 216–221, 290–291, and 334–337 each bind ATP; these read RNE, FRTREF, EL, and GADR. A substrate-binding site is contributed by 221–225; sequence FEQME. 330–334 is a substrate binding site; that stretch reads EPSLG.

It belongs to the class-II aminoacyl-tRNA synthetase family. In terms of assembly, homodimer.

It localises to the cytoplasm. The catalysed reaction is tRNA(Gly) + glycine + ATP = glycyl-tRNA(Gly) + AMP + diphosphate. Functionally, catalyzes the attachment of glycine to tRNA(Gly). This chain is Glycine--tRNA ligase, found in Acetivibrio thermocellus (strain ATCC 27405 / DSM 1237 / JCM 9322 / NBRC 103400 / NCIMB 10682 / NRRL B-4536 / VPI 7372) (Clostridium thermocellum).